Reading from the N-terminus, the 317-residue chain is Lipoyl synthase (317 aa).

The interval 1-28 is disordered; that stretch reads MDSQPQSKKAARGADKTARNPIPIIPAP. [4Fe-4S] cluster-binding residues include C64, C69, C75, C90, C94, C97, and S304. Positions 76 to 293 constitute a Radical SAM core domain; sequence FGGGTATFMI…QRDGMAMGFR (218 aa).

This sequence belongs to the radical SAM superfamily. Lipoyl synthase family. The cofactor is [4Fe-4S] cluster.

It localises to the cytoplasm. It catalyses the reaction [[Fe-S] cluster scaffold protein carrying a second [4Fe-4S](2+) cluster] + N(6)-octanoyl-L-lysyl-[protein] + 2 oxidized [2Fe-2S]-[ferredoxin] + 2 S-adenosyl-L-methionine + 4 H(+) = [[Fe-S] cluster scaffold protein] + N(6)-[(R)-dihydrolipoyl]-L-lysyl-[protein] + 4 Fe(3+) + 2 hydrogen sulfide + 2 5'-deoxyadenosine + 2 L-methionine + 2 reduced [2Fe-2S]-[ferredoxin]. It participates in protein modification; protein lipoylation via endogenous pathway; protein N(6)-(lipoyl)lysine from octanoyl-[acyl-carrier-protein]: step 2/2. Catalyzes the radical-mediated insertion of two sulfur atoms into the C-6 and C-8 positions of the octanoyl moiety bound to the lipoyl domains of lipoate-dependent enzymes, thereby converting the octanoylated domains into lipoylated derivatives. The chain is Lipoyl synthase from Acidithiobacillus ferrooxidans (strain ATCC 23270 / DSM 14882 / CIP 104768 / NCIMB 8455) (Ferrobacillus ferrooxidans (strain ATCC 23270)).